Reading from the N-terminus, the 1028-residue chain is MDMSGESSIKRRRSSIAASAERPAKHLRPENSTLTPGDATPANGTVYAVEDEGDAGRMMPIGPAQADSPEWQATIENVVKSVVSIHFCQTCSFDTDMSMSSQATGFVVDAERGYILTNRHVVCAGPFWGYCIFDNHEECDVRPVYRDPVHDFGILKFDPKAIRYLELTELKLRPEAARVGSEIRVVGNDAGEKLSILSGVISRLDRNAPEYGDGYCDFNTNYIQAAAAASGGSSGSPVVNIDGHAIALQAGGRADGAATDYFLPLDRPLRALQCIQRGEPVTRGTIQTQWILKPFDECRRLGLTPDWEAAVRKAAPQETSMLVAEIILPEGPADGKLEEGDVLLQVNGELLTQFIRLDDILDSSVGKPVRLLVQRGGQNVEVECEVGDLHAITPDRFVTVAGGTFHNLSYQQARLYAIATRGVYICEAAGSFKLENTLSGWIIDSVDKRPTRNLDEFIEVMRAIPDRSRVVVSYRHIRDLHTRGTGIVYIDRHWHPKMRMAVRNDGTGLWDFSDLADPVPAAAPVPRKADFIHLDGVSQAAVSDIVRSFVRVSCTMPLKLDGYPQAKKTGYGLVVDAEKGLVVVSRAIVPYDLCDINITVADSIIVTAQVVFLHPLQNYTVIQYDPSLVQAPVQSAKLSTEYIKQGQETIFVGFNQNFRIVVAKTTVTDITTVSIPANASAPRYRAINLDAVTVDTGLSGQCTNGVLIGEDGVVQALWLNYLGERTPSSHKDVEYHLGFATPALLPVTTKIQQGIIPKLRILNMESYVVQMSQARIMGVSEQWIQKVAQANPARHQLFMVRKVDCPPPQYSSTADALEEGDIILTLDGKLITRVSELDTMYDKEVLDVLIVRNGEELHLKVPTIPTEDLETDRAVVFCGAVLQKPHHAVRQQISKLHSEVYVSARSRGSPAYQYGLSPTNFITAVNGVPTPNLDSFVREVSKIPDNTYFRLRAVTFDNVPWVVTMKKNDHYFPMSEYIKDPSQPLGWLTVSHDRDRHKDGITPDQANLNPDAMDEAFEQVSDVEPDVE.

Positions 1–45 (MDMSGESSIKRRRSSIAASAERPAKHLRPENSTLTPGDATPANGT) are disordered. Residues 82–266 (VVSIHFCQTC…AATDYFLPLD (185 aa)) form a serine protease region. Active-site charge relay system residues include H120, D151, and S233. 2 PDZ domains span residues 289–374 (QWIL…LLVQ) and 876–957 (VFCG…VTFD).

The protein belongs to the peptidase S1C family.

It localises to the nucleus. Functionally, nuclear serine protease which mediates apoptosis. This chain is Pro-apoptotic serine protease nma111 (nma111), found in Aspergillus clavatus (strain ATCC 1007 / CBS 513.65 / DSM 816 / NCTC 3887 / NRRL 1 / QM 1276 / 107).